Reading from the N-terminus, the 198-residue chain is Beta-crystallin A1 (198 aa).

The interval 1–13 (MLYLVLFLVPFNS) is N-terminal arm. Beta/gamma crystallin 'Greek key' domains are found at residues 14–53 (IQIT…KVEC) and 54–100 (GAWI…RPIC). Residues C65 and C100 each carry the S-glutathionyl cysteine; alternate modification. An S-methylcysteine; alternate mark is found at C65 and C100. A connecting peptide region spans residues 101 to 106 (SANHKE). Beta/gamma crystallin 'Greek key' domains lie at 107–148 (SKIT…KIQC) and 149–197 (GAWV…RRIQ).

The protein belongs to the beta/gamma-crystallin family. Homo/heterodimer, or complexes of higher-order. The structure of beta-crystallin oligomers seems to be stabilized through interactions between the N-terminal arms. Interacts with CRYBA1.

In terms of biological role, crystallins are the dominant structural components of the vertebrate eye lens. The sequence is that of Beta-crystallin A1 from Mus musculus (Mouse).